Reading from the N-terminus, the 338-residue chain is Eukaryotic translation initiation factor 3 subunit H (338 aa).

The region spanning 22–154 (VQCDGLAVMK…LKAYRLTPQA (133 aa)) is the MPN domain.

It belongs to the eIF-3 subunit H family. Component of the eukaryotic translation initiation factor 3 (eIF-3) complex. The eIF-3 complex interacts with pix. Interacts with mxt.

The protein localises to the cytoplasm. Component of the eukaryotic translation initiation factor 3 (eIF-3) complex, which is involved in protein synthesis of a specialized repertoire of mRNAs and, together with other initiation factors, stimulates binding of mRNA and methionyl-tRNAi to the 40S ribosome. The eIF-3 complex specifically targets and initiates translation of a subset of mRNAs involved in cell proliferation. The polypeptide is Eukaryotic translation initiation factor 3 subunit H (Drosophila erecta (Fruit fly)).